We begin with the raw amino-acid sequence, 3023 residues long: Genome polyprotein (3023 aa).

Positions 132-274 (TCSSSGLDNL…QSITLRATHF (143 aa)) constitute a Peptidase S30 domain. Residues His183, Asp192, and Ser225 each act as for P1 proteinase activity in the active site. The short motif at 325–328 (KITC) is the Involved in interaction with stylet and aphid transmission element. The short motif at 583 to 585 (PTK) is the Involved in virions binding and aphid transmission element. Residues 609-731 (MYIAKEGYCY…ESPMAQYKVG (123 aa)) form the Peptidase C6 domain. Residues Cys617 and His690 each act as for helper component proteinase activity in the active site. The region spanning 1202-1354 (QIAHNEHKDI…TQYPVELLIE (153 aa)) is the Helicase ATP-binding domain. 1215–1222 (GAVGSGKS) contributes to the ATP binding site. Residues 1304 to 1307 (DEFH) carry the DEFH box motif. Residues 1367–1532 (GTDAHADVVK…GLPVTTQNVS (166 aa)) enclose the Helicase C-terminal domain. Residues 1796–1800 (GIGLG) carry the GxxxG motif motif. Positions 1856 to 1863 (KKGKSKGK) match the Nuclear localization signal motif. Tyr1878 carries the post-translational modification O-(5'-phospho-RNA)-tyrosine. Tyr1878 carries the post-translational modification O-UMP-tyrosine; transient. The Peptidase C4 domain occupies 2002-2218 (SKALLKGVRD…ISWGSFTLVE (217 aa)). Active-site for nuclear inclusion protein A activity residues include His2047, Asp2082, and Cys2152. Positions 2484-2608 (WVYCDADGSQ…AISPELEHVL (125 aa)) constitute a RdRp catalytic domain. Thr3006 is subject to Phosphothreonine.

Belongs to the potyviridae genome polyprotein family. In terms of assembly, interacts with host eIF4E protein (via cap-binding region); this interaction mediates the translation of the VPg-viral RNA conjugates. Part of a complex that comprises VPg, RNA, host EIF4E and EIF4G; this interaction mediates the translation of the VPg-viral RNA conjugates. In terms of processing, VPg is uridylylated by the polymerase and is covalently attached to the 5'-end of the genomic RNA. This uridylylated form acts as a nucleotide-peptide primer for the polymerase. Potyviral RNA is expressed as two polyproteins which undergo post-translational proteolytic processing. Genome polyprotein is processed by NIa-pro, P1 and HC-pro proteinases resulting in the production of at least ten individual proteins. P3N-PIPO polyprotein is cleaved by P1 and HC-pro proteinases resulting in the production of three individual proteins. The P1 proteinase and the HC-pro cleave only their respective C-termini autocatalytically. 6K1 is essential for proper proteolytic separation of P3 from CI.

Its subcellular location is the host cytoplasmic vesicle. It is found in the host nucleus. It localises to the virion. It catalyses the reaction RNA(n) + a ribonucleoside 5'-triphosphate = RNA(n+1) + diphosphate. It carries out the reaction Hydrolyzes glutaminyl bonds, and activity is further restricted by preferences for the amino acids in P6 - P1' that vary with the species of potyvirus, e.g. Glu-Xaa-Xaa-Tyr-Xaa-Gln-|-(Ser or Gly) for the enzyme from tobacco etch virus. The natural substrate is the viral polyprotein, but other proteins and oligopeptides containing the appropriate consensus sequence are also cleaved.. The catalysed reaction is Hydrolyzes a Gly-|-Gly bond at its own C-terminus, commonly in the sequence -Tyr-Xaa-Val-Gly-|-Gly, in the processing of the potyviral polyprotein.. Required for aphid transmission and also has proteolytic activity. Only cleaves a Gly-Gly dipeptide at its own C-terminus. Interacts with virions and aphid stylets. Acts as a suppressor of RNA-mediated gene silencing, also known as post-transcriptional gene silencing (PTGS), a mechanism of plant viral defense that limits the accumulation of viral RNAs. May have RNA-binding activity. Functionally, has helicase activity. It may be involved in replication. In terms of biological role, indispensable for virus replication. Reduces the abundance of host transcripts related to jasmonic acid biosynthesis therefore altering the host defenses. In order to increase its own stability, decreases host protein degradation pathways. Its function is as follows. Indispensable for virus replication. Mediates the cap-independent, EIF4E-dependent translation of viral genomic RNAs. Binds to the cap-binding site of host EIF4E and thus interferes with the host EIF4E-dependent mRNA export and translation. VPg-RNA directly binds EIF4E and is a template for transcription. Also forms trimeric complexes with EIF4E-EIF4G, which are templates for translation. Functionally, has RNA-binding and proteolytic activities. Main protease that processes most of the polyprotein cleavages. In terms of biological role, an RNA-dependent RNA polymerase that plays an essential role in the virus replication. Its function is as follows. Involved in aphid transmission, cell-to-cell and systemis movement, encapsidation of the viral RNA and in the regulation of viral RNA amplification. In Tobacco vein mottling virus (TVMV), this protein is Genome polyprotein.